A 630-amino-acid chain; its full sequence is Protein mono-ADP-ribosyltransferase PARP6 (630 aa).

Cys237 is subject to ADP-ribosylcysteine. The 227-residue stretch at 394-620 (EMTQGSYLEI…QDPKIQKEIM (227 aa)) folds into the PARP catalytic domain. Asp600 carries the post-translational modification ADP-ribosyl aspartic acid.

Belongs to the ARTD/PARP family. Post-translationally, auto-mono-ADP-ribosylated.

The enzyme catalyses L-aspartyl-[protein] + NAD(+) = 4-O-(ADP-D-ribosyl)-L-aspartyl-[protein] + nicotinamide. The catalysed reaction is L-cysteinyl-[protein] + NAD(+) = S-(ADP-D-ribosyl)-L-cysteinyl-[protein] + nicotinamide + H(+). Its function is as follows. Mono-ADP-ribosyltransferase that mediates mono-ADP-ribosylation of target proteins. In Homo sapiens (Human), this protein is Protein mono-ADP-ribosyltransferase PARP6.